A 343-amino-acid polypeptide reads, in one-letter code: Arginine-hydroxylase NDUFAF5, mitochondrial (343 aa).

A mitochondrion-targeting transit peptide spans 1–29 (MLRRVVLSRLYARLGGPAVSAGRGGRRGV). The tract at residues 18 to 40 (AVSAGRGGRRGVASSVPPSGSTS) is disordered.

Belongs to the methyltransferase superfamily. In terms of assembly, interacts with NDUFAF8, leading to stabilize NDUFAF5. Interacts with NDUFS7. Interacts with PYURF (via TRM112 domain); the interaction is direct and stabilizes NDUFAF5 protein.

The protein resides in the mitochondrion inner membrane. Its function is as follows. Arginine hydroxylase that mediates hydroxylation of 'Arg-111' of NDUFS7 and is involved in the assembly of mitochondrial NADH:ubiquinone oxidoreductase complex (complex I, MT-ND1) at early stages. May also have methyltransferase activity. In Rattus norvegicus (Rat), this protein is Arginine-hydroxylase NDUFAF5, mitochondrial.